The chain runs to 560 residues: Hemocyanin, units G and H (560 aa).

A disulfide bridge connects residues cysteine 1 and cysteine 11. The segment at 1–184 is unit G; it reads CPTPDAPQYA…AKGLVSQHIE (184 aa). Positions 12 to 14 form a cross-link, 2'-(S-cysteinyl)-histidine (Cys-His); it reads CLH. Cysteine 93 and cysteine 98 are joined by a disulfide. N-linked (GlcNAc...) asparagine glycosylation is present at asparagine 142. Residues 185–560 are unit H; the sequence is DHDTETLIRK…KPGTGTQLTR (376 aa). Histidine 230 contacts Cu cation. Cysteine 236 and cysteine 246 are oxidised to a cystine. An N-linked (GlcNAc...) asparagine glycan is attached at asparagine 240. The 2'-(S-cysteinyl)-histidine (Cys-His) cross-link spans 247-249; it reads CQH. 5 residues coordinate Cu cation: histidine 249, histidine 258, histidine 358, histidine 362, and histidine 389. 2 disulfides stabilise this stretch: cysteine 348–cysteine 415 and cysteine 476–cysteine 482.

It belongs to the tyrosinase family. Hemocyanin subfamily. Decamers of large identical subunits (390 kDa), each containing 8 globular oxygen-binding functional units. The cofactor is Cu(2+).

Functionally, hemocyanins are copper-containing oxygen carriers occurring freely dissolved in the hemolymph of many mollusks and arthropods. The sequence is that of Hemocyanin, units G and H from Sepia officinalis (Common cuttlefish).